A 414-amino-acid polypeptide reads, in one-letter code: Tyrosine--tRNA ligase (414 aa).

Tyr35 serves as a coordination point for L-tyrosine. Positions 40 to 49 (PTADSLHVGH) match the 'HIGH' region motif. L-tyrosine contacts are provided by Tyr164 and Gln168. A 'KMSKS' region motif is present at residues 226 to 230 (KFGKT). Lys229 is an ATP binding site. In terms of domain architecture, S4 RNA-binding spans 347–414 (TKVIDALVEL…KKKYFVILVK (68 aa)).

This sequence belongs to the class-I aminoacyl-tRNA synthetase family. TyrS type 1 subfamily. Homodimer.

It is found in the cytoplasm. The catalysed reaction is tRNA(Tyr) + L-tyrosine + ATP = L-tyrosyl-tRNA(Tyr) + AMP + diphosphate + H(+). Its function is as follows. Catalyzes the attachment of tyrosine to tRNA(Tyr) in a two-step reaction: tyrosine is first activated by ATP to form Tyr-AMP and then transferred to the acceptor end of tRNA(Tyr). The polypeptide is Tyrosine--tRNA ligase (Mycoplasma capricolum subsp. capricolum (strain California kid / ATCC 27343 / NCTC 10154)).